The primary structure comprises 265 residues: 4-hydroxy-tetrahydrodipicolinate reductase (265 aa).

9 to 14 (GPRGRM) contributes to the NAD(+) binding site. NADP(+) is bound at residue Arg37. Residues 98-100 (GTT) and 124-127 (APNF) contribute to the NAD(+) site. Residue His154 is the Proton donor/acceptor of the active site. His155 contributes to the (S)-2,3,4,5-tetrahydrodipicolinate binding site. Lys158 functions as the Proton donor in the catalytic mechanism. A (S)-2,3,4,5-tetrahydrodipicolinate-binding site is contributed by 164–165 (GT).

Belongs to the DapB family.

It is found in the cytoplasm. It carries out the reaction (S)-2,3,4,5-tetrahydrodipicolinate + NAD(+) + H2O = (2S,4S)-4-hydroxy-2,3,4,5-tetrahydrodipicolinate + NADH + H(+). It catalyses the reaction (S)-2,3,4,5-tetrahydrodipicolinate + NADP(+) + H2O = (2S,4S)-4-hydroxy-2,3,4,5-tetrahydrodipicolinate + NADPH + H(+). It participates in amino-acid biosynthesis; L-lysine biosynthesis via DAP pathway; (S)-tetrahydrodipicolinate from L-aspartate: step 4/4. Functionally, catalyzes the conversion of 4-hydroxy-tetrahydrodipicolinate (HTPA) to tetrahydrodipicolinate. In Geobacillus thermodenitrificans (strain NG80-2), this protein is 4-hydroxy-tetrahydrodipicolinate reductase.